A 545-amino-acid chain; its full sequence is GMP synthase [glutamine-hydrolyzing] (545 aa).

The Glutamine amidotransferase type-1 domain occupies 17–211 (TVLVLDMGSQ…ATKICGARPD (195 aa)). C93 functions as the Nucleophile in the catalytic mechanism. Active-site residues include H185 and E187. The 209-residue stretch at 212–420 (WKMDDFSARE…LGIHEELIGR (209 aa)) folds into the GMPS ATP-PPase domain. ATP is bound at residue 240–246 (SGGVDST). R313, D482, K537, and E543 together coordinate XMP.

As to quaternary structure, homodimer. Requires Mg(2+) as cofactor.

The protein resides in the cytoplasm. The protein localises to the cytosol. It catalyses the reaction XMP + L-glutamine + ATP + H2O = GMP + L-glutamate + AMP + diphosphate + 2 H(+). The protein operates within purine metabolism; GMP biosynthesis; GMP from XMP (L-Gln route): step 1/1. Its function is as follows. Catalyzes the conversion of xanthine monophosphate (XMP) to GMP in the presence of glutamine and ATP through an adenyl-XMP intermediate. This Gibberella zeae (strain ATCC MYA-4620 / CBS 123657 / FGSC 9075 / NRRL 31084 / PH-1) (Wheat head blight fungus) protein is GMP synthase [glutamine-hydrolyzing] (GUA1).